The following is a 184-amino-acid chain: Large ribosomal subunit protein bL9 (184 aa).

The disordered stretch occupies residues 156-184 (RQAKLQNQKSEQQEAEQDASKEAADADDS). The segment covering 173–184 (DASKEAADADDS) has biased composition (basic and acidic residues).

It belongs to the bacterial ribosomal protein bL9 family.

In terms of biological role, binds to the 23S rRNA. In Wolbachia pipientis subsp. Culex pipiens (strain wPip), this protein is Large ribosomal subunit protein bL9.